A 426-amino-acid chain; its full sequence is D-tagatose-1,6-bisphosphate aldolase subunit KbaZ (426 aa).

This sequence belongs to the GatZ/KbaZ family. KbaZ subfamily. In terms of assembly, forms a complex with KbaY.

It functions in the pathway carbohydrate metabolism; D-tagatose 6-phosphate degradation; D-glyceraldehyde 3-phosphate and glycerone phosphate from D-tagatose 6-phosphate: step 2/2. Its function is as follows. Component of the tagatose-1,6-bisphosphate aldolase KbaYZ that is required for full activity and stability of the Y subunit. Could have a chaperone-like function for the proper and stable folding of KbaY. When expressed alone, KbaZ does not show any aldolase activity. This Escherichia coli O6:K15:H31 (strain 536 / UPEC) protein is D-tagatose-1,6-bisphosphate aldolase subunit KbaZ.